The sequence spans 825 residues: ATP-dependent RNA helicase DBP4 (825 aa).

Positions 1–34 (MAAGNAKGGFAHRNKSVPKKTDAKSLKRKRGQED) are disordered. Residues 19-34 (KKTDAKSLKRKRGQED) show a composition bias toward basic and acidic residues. Residues 53-81 (KQFTDLPLCEATASGLRASHFEVLTDVQR) carry the Q motif motif. The Helicase ATP-binding domain occupies 84–258 (IPLALKGRDI…RLSLKEPEYV (175 aa)). 97-104 (AKTGSGKT) lines the ATP pocket. Residues 206-209 (DEAD) carry the DEAD box motif. The Helicase C-terminal domain occupies 284 to 439 (KLDTLFGFLR…NKKKSIKNEL (156 aa)). Disordered stretches follow at residues 508–536 (NASR…KQVR) and 676–825 (AESE…LLED). Basic and acidic residues-rich tracts occupy residues 677–691 (ESEK…DKQA) and 700–714 (RERQ…ELER). Acidic residues-rich tracts occupy residues 730–739 (GEGDEGDEDP), 761–770 (GEDEGDDGEV), and 805–816 (MAEEPENLEDLE).

Belongs to the DEAD box helicase family. DDX10/DBP4 subfamily. Interacts with the U3 and U14 snoRNAs. Associates with pre-ribosomal complexes.

Its subcellular location is the nucleus. It is found in the nucleolus. It catalyses the reaction ATP + H2O = ADP + phosphate + H(+). Functionally, ATP-dependent RNA helicase required for ribosome biogenesis. Involved in the release of U14 snoRNA in pre-ribosomal complexes. Required for pre-rRNA cleavage at site A2. This chain is ATP-dependent RNA helicase DBP4 (DBP4), found in Chaetomium globosum (strain ATCC 6205 / CBS 148.51 / DSM 1962 / NBRC 6347 / NRRL 1970) (Soil fungus).